Reading from the N-terminus, the 219-residue chain is Uracil-DNA glycosylase (219 aa).

Catalysis depends on D61, which acts as the Proton acceptor.

The protein belongs to the uracil-DNA glycosylase (UDG) superfamily. UNG family.

The protein resides in the cytoplasm. The catalysed reaction is Hydrolyzes single-stranded DNA or mismatched double-stranded DNA and polynucleotides, releasing free uracil.. Excises uracil residues from the DNA which can arise as a result of misincorporation of dUMP residues by DNA polymerase or due to deamination of cytosine. The protein is Uracil-DNA glycosylase of Haemophilus influenzae (strain PittEE).